Consider the following 409-residue polypeptide: Diels-Alderase ucsH (409 aa).

A helical membrane pass occupies residues isoleucine 386–glutamate 406.

Belongs to the Diels-Alderase family.

Its subcellular location is the membrane. It participates in mycotoxin biosynthesis. Its function is as follows. Diels-Alderase; part of the gene cluster that mediates the biosynthesis of UCS1025A, a member of the pyrrolizidinone family that acts as a strong telomerase inhibitor and displays potent antibacterial and antitumor properties. These compounds share a hemiaminal-containing pyrrolizidinone core fused with a gamma-lactone, giving a furopyrrolizidine that is connected to a decalin fragment. The polyketide synthase module (PKS) of the PKS-NRPS ucsA is responsible for the synthesis of the polyketide backbone via the condensation of an acetyl-CoA starter unit with 6 malonyl-CoA units. The downstream nonribosomal peptide synthetase (NRPS) module then amidates the carboxyl end of the polyketide with a 2S,3S-methylproline derived from L-isoleucine by the 2-oxoglutarate-dependent dioxygenase ucsF which converts L-isoleucine to (4S,5S)-4-methylpyrroline-5-carboxylate that is further converted to 2S,3S-methylproline by the pyrroline-5-carboxylate reductase ucsG. Reductive release of the completed aminoacyl polyketide from the assembly line can form the 3-pyrrolin-2-one structure via an intramolecular Knoevenagel reaction. Because ucsA lacks a designated enoylreductase (ER) domain, the required activity is provided the enoyl reductase ucsL. This keto acyclic precursor is the substrate of the Diels-Alderase ucsH, that catalyzes the Diels-Alder cycloaddition. Oxidation of the 3S-methyl group to a carboxylate by the cytochrome P450 monooxygenase ucsK allows an oxa-Michael cyclization that might involve the reductase/dehydrogenase ucsI and which furnishes the furopyrrolizidine. The oxidase ucsJ likely plays a critical role in stereoselective reduction of the C5-C6 double bond to afford the required R-configured carboxylate group. Further enolization and oxidation at C5 by an unidentified enzyme affords the last intermediate that can undergo oxa-Michael cyclization to yield UCS1025A. In Acremonium sp, this protein is Diels-Alderase ucsH.